A 358-amino-acid chain; its full sequence is Isopentenyl-diphosphate delta-isomerase (358 aa).

12–13 (RK) provides a ligand contact to substrate. Residues 69–71 (AMT), serine 99, and asparagine 128 contribute to the FMN site. Substrate is bound at residue glutamine 158. Position 159 (glutamate 159) interacts with Mg(2+). Residues lysine 190, threonine 220, 267-269 (GIR), and 288-289 (AG) each bind FMN.

The protein belongs to the IPP isomerase type 2 family. As to quaternary structure, homooctamer. Dimer of tetramers. FMN is required as a cofactor. The cofactor is NADPH. It depends on Mg(2+) as a cofactor.

Its subcellular location is the cytoplasm. It carries out the reaction isopentenyl diphosphate = dimethylallyl diphosphate. Functionally, involved in the biosynthesis of isoprenoids. Catalyzes the 1,3-allylic rearrangement of the homoallylic substrate isopentenyl (IPP) to its allylic isomer, dimethylallyl diphosphate (DMAPP). This chain is Isopentenyl-diphosphate delta-isomerase, found in Listeria welshimeri serovar 6b (strain ATCC 35897 / DSM 20650 / CCUG 15529 / CIP 8149 / NCTC 11857 / SLCC 5334 / V8).